We begin with the raw amino-acid sequence, 250 residues long: Triosephosphate isomerase (250 aa).

8-10 provides a ligand contact to substrate; it reads NWK. H93 serves as the catalytic Electrophile. E165 (proton acceptor) is an active-site residue. G171 and S211 together coordinate substrate.

The protein belongs to the triosephosphate isomerase family. Homodimer.

It is found in the cytoplasm. It catalyses the reaction D-glyceraldehyde 3-phosphate = dihydroxyacetone phosphate. The protein operates within carbohydrate biosynthesis; gluconeogenesis. It functions in the pathway carbohydrate degradation; glycolysis; D-glyceraldehyde 3-phosphate from glycerone phosphate: step 1/1. Its function is as follows. Involved in the gluconeogenesis. Catalyzes stereospecifically the conversion of dihydroxyacetone phosphate (DHAP) to D-glyceraldehyde-3-phosphate (G3P). This chain is Triosephosphate isomerase, found in Malacoplasma penetrans (strain HF-2) (Mycoplasma penetrans).